A 99-amino-acid polypeptide reads, in one-letter code: DNA-directed RNA polymerase subunit Rpo11 (99 aa).

It belongs to the archaeal Rpo11/eukaryotic RPB11/RPC19 RNA polymerase subunit family. In terms of assembly, part of the RNA polymerase complex. Forms an Rpo3-Rpo10-Rpo11-Rpo12 complex upon coexpression.

The protein localises to the cytoplasm. The catalysed reaction is RNA(n) + a ribonucleoside 5'-triphosphate = RNA(n+1) + diphosphate. DNA-dependent RNA polymerase (RNAP) catalyzes the transcription of DNA into RNA using the four ribonucleoside triphosphates as substrates. The polypeptide is DNA-directed RNA polymerase subunit Rpo11 (Methanocaldococcus jannaschii (strain ATCC 43067 / DSM 2661 / JAL-1 / JCM 10045 / NBRC 100440) (Methanococcus jannaschii)).